A 232-amino-acid polypeptide reads, in one-letter code: Orotidine 5'-phosphate decarboxylase (232 aa).

Substrate-binding positions include aspartate 11, lysine 33, aspartate 60 to threonine 69, threonine 119, arginine 180, glutamine 189, glycine 209, and arginine 210. Lysine 62 (proton donor) is an active-site residue.

This sequence belongs to the OMP decarboxylase family. Type 1 subfamily. As to quaternary structure, homodimer.

The enzyme catalyses orotidine 5'-phosphate + H(+) = UMP + CO2. It participates in pyrimidine metabolism; UMP biosynthesis via de novo pathway; UMP from orotate: step 2/2. Its function is as follows. Catalyzes the decarboxylation of orotidine 5'-monophosphate (OMP) to uridine 5'-monophosphate (UMP). This Nitrosococcus oceani (strain ATCC 19707 / BCRC 17464 / JCM 30415 / NCIMB 11848 / C-107) protein is Orotidine 5'-phosphate decarboxylase.